The sequence spans 132 residues: Fatty acid-binding protein, intestinal (132 aa).

A2 bears the N-acetylalanine mark. Hexadecanoate-binding residues include W83 and R107. Tetradecanoate-binding residues include W83 and R107.

It belongs to the calycin superfamily. Fatty-acid binding protein (FABP) family.

The protein localises to the cytoplasm. Functionally, FABPs are thought to play a role in the intracellular transport of long-chain fatty acids and their acyl-CoA esters. FABP2 is probably involved in triglyceride-rich lipoprotein synthesis. Binds saturated long-chain fatty acids with a high affinity, but binds with a lower affinity to unsaturated long-chain fatty acids. FABP2 may also help maintain energy homeostasis by functioning as a lipid sensor. The sequence is that of Fatty acid-binding protein, intestinal (FABP2) from Sus scrofa (Pig).